The following is a 362-amino-acid chain: Biotin synthase (362 aa).

The 236-residue stretch at 70-305 folds into the Radical SAM core domain; it reads CCGNVVDLCS…QQIIRYAGGR (236 aa). [4Fe-4S] cluster contacts are provided by C88, C92, and C95. [2Fe-2S] cluster-binding residues include C133, C170, C230, and R300.

This sequence belongs to the radical SAM superfamily. Biotin synthase family. Homodimer. Requires [4Fe-4S] cluster as cofactor. [2Fe-2S] cluster is required as a cofactor.

It carries out the reaction (4R,5S)-dethiobiotin + (sulfur carrier)-SH + 2 reduced [2Fe-2S]-[ferredoxin] + 2 S-adenosyl-L-methionine = (sulfur carrier)-H + biotin + 2 5'-deoxyadenosine + 2 L-methionine + 2 oxidized [2Fe-2S]-[ferredoxin]. The protein operates within cofactor biosynthesis; biotin biosynthesis; biotin from 7,8-diaminononanoate: step 2/2. Its function is as follows. Catalyzes the conversion of dethiobiotin (DTB) to biotin by the insertion of a sulfur atom into dethiobiotin via a radical-based mechanism. The protein is Biotin synthase of Synechocystis sp. (strain ATCC 27184 / PCC 6803 / Kazusa).